A 135-amino-acid polypeptide reads, in one-letter code: MLSPKRTRFRKQHRGRMKGTSYRGNHISFGRYALQALEPSWITARQIEAGRRAISRYARRGGKIWVRLFPDKPVTLRPAETRMGSGKGSPEYWVSVVKPGRILYEIGGVSENVARTAMLLAASKMPIRTQFIIEG.

Residues 1-17 (MLSPKRTRFRKQHRGRM) show a composition bias toward basic residues. The tract at residues 1–20 (MLSPKRTRFRKQHRGRMKGT) is disordered.

The protein belongs to the universal ribosomal protein uL16 family. As to quaternary structure, part of the 50S ribosomal subunit.

It is found in the plastid. The protein resides in the chloroplast. The chain is Large ribosomal subunit protein uL16c from Lemna minor (Common duckweed).